The following is a 442-amino-acid chain: Histidine--tRNA ligase (442 aa).

Belongs to the class-II aminoacyl-tRNA synthetase family. As to quaternary structure, homodimer.

It is found in the cytoplasm. The catalysed reaction is tRNA(His) + L-histidine + ATP = L-histidyl-tRNA(His) + AMP + diphosphate + H(+). In Helicobacter pylori (strain ATCC 700392 / 26695) (Campylobacter pylori), this protein is Histidine--tRNA ligase (hisS).